We begin with the raw amino-acid sequence, 93 residues long: Aspartyl/glutamyl-tRNA(Asn/Gln) amidotransferase subunit C (93 aa).

It belongs to the GatC family. As to quaternary structure, heterotrimer of A, B and C subunits.

It catalyses the reaction L-glutamyl-tRNA(Gln) + L-glutamine + ATP + H2O = L-glutaminyl-tRNA(Gln) + L-glutamate + ADP + phosphate + H(+). The catalysed reaction is L-aspartyl-tRNA(Asn) + L-glutamine + ATP + H2O = L-asparaginyl-tRNA(Asn) + L-glutamate + ADP + phosphate + 2 H(+). Its function is as follows. Allows the formation of correctly charged Asn-tRNA(Asn) or Gln-tRNA(Gln) through the transamidation of misacylated Asp-tRNA(Asn) or Glu-tRNA(Gln) in organisms which lack either or both of asparaginyl-tRNA or glutaminyl-tRNA synthetases. The reaction takes place in the presence of glutamine and ATP through an activated phospho-Asp-tRNA(Asn) or phospho-Glu-tRNA(Gln). The polypeptide is Aspartyl/glutamyl-tRNA(Asn/Gln) amidotransferase subunit C (Nautilia profundicola (strain ATCC BAA-1463 / DSM 18972 / AmH)).